Reading from the N-terminus, the 437-residue chain is Enolase (437 aa).

Q166 is a binding site for (2R)-2-phosphoglycerate. Catalysis depends on E208, which acts as the Proton donor. 3 residues coordinate Mg(2+): D245, E295, and D322. (2R)-2-phosphoglycerate-binding residues include K347, R376, S377, and K398. K347 serves as the catalytic Proton acceptor.

The protein belongs to the enolase family. It depends on Mg(2+) as a cofactor.

It localises to the cytoplasm. The protein localises to the secreted. The protein resides in the cell surface. It carries out the reaction (2R)-2-phosphoglycerate = phosphoenolpyruvate + H2O. Its pathway is carbohydrate degradation; glycolysis; pyruvate from D-glyceraldehyde 3-phosphate: step 4/5. Functionally, catalyzes the reversible conversion of 2-phosphoglycerate (2-PG) into phosphoenolpyruvate (PEP). It is essential for the degradation of carbohydrates via glycolysis. This chain is Enolase, found in Lachnoclostridium phytofermentans (strain ATCC 700394 / DSM 18823 / ISDg) (Clostridium phytofermentans).